We begin with the raw amino-acid sequence, 173 residues long: FMCDEMERSVHDALCVVKRVLESKSVVPGGGAVEAALSIYLENYATSMGSREQLAIAEFARSLLVIPKTLAVNRAQDSTDLVAKLRAFHNEAQVNPDRKNLKWIGLDLVNGKARDNKQAGVFEPTMVKTKSLKFATEAAITILRIDDLIKLYPESNDKGQSYQDAVRSGSLEN.

Belongs to the TCP-1 chaperonin family. Component of the chaperonin-containing T-complex (TRiC), a heterooligomeric complex of about 850 to 900 kDa that forms two stacked rings, 12 to 16 nm in diameter.

Its subcellular location is the cytoplasm. The protein resides in the cytosol. Functionally, component of the chaperonin-containing T-complex (TRiC), a molecular chaperone complex that assists the folding of proteins upon ATP hydrolysis. In Ambystoma mexicanum (Axolotl), this protein is T-complex protein 1 subunit alpha.